A 492-amino-acid polypeptide reads, in one-letter code: Lipopolysaccharide biosynthesis protein WzxC (492 aa).

Over 1 to 12 (MSLREKTISGAK) the chain is Cytoplasmic. The helical transmembrane segment at 13 to 33 (WSAIATVIIIGLGLVQMTVLA) threads the bilayer. The Periplasmic portion of the chain corresponds to 34–42 (RIIDNHQFG). A helical membrane pass occupies residues 43 to 63 (LLTVSLVIIALADTLSDFGIA). The Cytoplasmic portion of the chain corresponds to 64–81 (NSIIQRKEISHLELTTLY). The helical transmembrane segment at 82–102 (WLNVGLGIVVCVAVFLLSDLI) threads the bilayer. Residues 103–104 (GD) lie on the Periplasmic side of the membrane. A helical membrane pass occupies residues 105–125 (VLNNPDLAPLIKTLSLAFVVI). Topologically, residues 126–157 (PHGQQFRALMQKELEFNKIGMIETSAVLAGFT) are cytoplasmic. Residues 158–178 (CTVVSAHFWPLAMTAILGYLV) form a helical membrane-spanning segment. The Periplasmic portion of the chain corresponds to 179 to 236 (NSAVRTLLFGYFGRKIYRPGLHFSLASVAPNLRFGAWLTADSIINYLNTNLSTLVLAR). Residues 237 to 257 (ILGAGVAGGYNLAYNVAVVPP) traverse the membrane as a helical segment. Over 258 to 288 (MKLNPIITRVLFPAFAKIQDDTEKLRVNFYK) the chain is Cytoplasmic. The chain crosses the membrane as a helical span at residues 289–309 (LLSVVGIINFPALLGLMVVSN). The Periplasmic segment spans residues 310-322 (NFVPLVFGEKWNS). Residues 323 to 343 (IIPVLQLLCVVGLLRSVGNPI) form a helical membrane-spanning segment. Over 344 to 364 (GSLLMAKARVDISFKFNVFKT) the chain is Cytoplasmic. A helical membrane pass occupies residues 365 to 385 (FLFIPAIVIGGQMAGAIGVTL). Position 386 (G386) is a topological domain, periplasmic. The chain crosses the membrane as a helical span at residues 387–407 (FLLVQIINTILSYFVMIKPVL). Residues 408–417 (GSSYRQYILS) are Cytoplasmic-facing. A helical transmembrane segment spans residues 418–438 (LWLPFYLSLPTLVVSYALGIV). At 439–445 (LKGQLAL) the chain is on the periplasmic side. Residues 446-466 (GMLLAVQIATGVLAFVVMIVL) traverse the membrane as a helical segment. Residues 467-492 (SRHPLVVEVKRQFCRSEKMKMLLRAG) are Cytoplasmic-facing.

This sequence belongs to the polysaccharide synthase family.

The protein localises to the cell inner membrane. Its pathway is bacterial outer membrane biogenesis; lipopolysaccharide biosynthesis. This Escherichia coli (strain K12) protein is Lipopolysaccharide biosynthesis protein WzxC (wzxC).